We begin with the raw amino-acid sequence, 377 residues long: Chaperone protein DnaJ (377 aa).

The J domain maps to 4–69 (DYYEALGVTR…QKRAAYDRFG (66 aa)). A CR-type zinc finger spans residues 135–213 (GKTAQIRVPT…CHGQGRVTQE (79 aa)). Zn(2+) is bound by residues Cys-148, Cys-151, Cys-165, Cys-168, Cys-187, Cys-190, Cys-201, and Cys-204. CXXCXGXG motif repeat units lie at residues 148–155 (CDECSGSG), 165–172 (CTMCSGSG), 187–194 (CPGCNGRG), and 201–208 (CEKCHGQG).

It belongs to the DnaJ family. Homodimer. It depends on Zn(2+) as a cofactor.

The protein localises to the cytoplasm. Its function is as follows. Participates actively in the response to hyperosmotic and heat shock by preventing the aggregation of stress-denatured proteins and by disaggregating proteins, also in an autonomous, DnaK-independent fashion. Unfolded proteins bind initially to DnaJ; upon interaction with the DnaJ-bound protein, DnaK hydrolyzes its bound ATP, resulting in the formation of a stable complex. GrpE releases ADP from DnaK; ATP binding to DnaK triggers the release of the substrate protein, thus completing the reaction cycle. Several rounds of ATP-dependent interactions between DnaJ, DnaK and GrpE are required for fully efficient folding. Also involved, together with DnaK and GrpE, in the DNA replication of plasmids through activation of initiation proteins. The chain is Chaperone protein DnaJ from Brucella canis (strain ATCC 23365 / NCTC 10854 / RM-666).